Consider the following 575-residue polypeptide: Acetolactate synthase large subunit (575 aa).

Glutamate 57 is a binding site for thiamine diphosphate. Residues arginine 159, histidine 265–arginine 286, and aspartate 308–aspartate 327 contribute to the FAD site. Residues glutamine 395 to serine 475 form a thiamine pyrophosphate binding region. Mg(2+)-binding residues include aspartate 446 and asparagine 473.

Belongs to the TPP enzyme family. In terms of assembly, dimer of large and small chains. Mg(2+) serves as cofactor. The cofactor is thiamine diphosphate.

It carries out the reaction 2 pyruvate + H(+) = (2S)-2-acetolactate + CO2. It participates in amino-acid biosynthesis; L-isoleucine biosynthesis; L-isoleucine from 2-oxobutanoate: step 1/4. Its pathway is amino-acid biosynthesis; L-valine biosynthesis; L-valine from pyruvate: step 1/4. The sequence is that of Acetolactate synthase large subunit (ilvB) from Lactococcus lactis subsp. lactis (strain IL1403) (Streptococcus lactis).